A 498-amino-acid polypeptide reads, in one-letter code: Fascin-3 (498 aa).

It belongs to the fascin family. Expressed in testis.

Its subcellular location is the cytoplasm. It localises to the cytoskeleton. In terms of biological role, acts as an actin bundling protein. The sequence is that of Fascin-3 (Fscn3) from Mus musculus (Mouse).